The following is a 213-amino-acid chain: Pyrrolidone-carboxylate peptidase (213 aa).

Residues E78, C141, and H165 contribute to the active site.

It belongs to the peptidase C15 family. As to quaternary structure, homotetramer.

Its subcellular location is the cytoplasm. The catalysed reaction is Release of an N-terminal pyroglutamyl group from a polypeptide, the second amino acid generally not being Pro.. Its function is as follows. Removes 5-oxoproline from various penultimate amino acid residues except L-proline. The sequence is that of Pyrrolidone-carboxylate peptidase from Finegoldia magna (strain ATCC 29328 / DSM 20472 / WAL 2508) (Peptostreptococcus magnus).